The sequence spans 141 residues: ATP synthase epsilon chain (141 aa).

The protein belongs to the ATPase epsilon chain family. In terms of assembly, F-type ATPases have 2 components, CF(1) - the catalytic core - and CF(0) - the membrane proton channel. CF(1) has five subunits: alpha(3), beta(3), gamma(1), delta(1), epsilon(1). CF(0) has three main subunits: a, b and c.

It localises to the cell inner membrane. Its function is as follows. Produces ATP from ADP in the presence of a proton gradient across the membrane. The sequence is that of ATP synthase epsilon chain from Gluconacetobacter diazotrophicus (strain ATCC 49037 / DSM 5601 / CCUG 37298 / CIP 103539 / LMG 7603 / PAl5).